The following is a 111-amino-acid chain: Probable 4-amino-4-deoxy-L-arabinose-phosphoundecaprenol flippase subunit ArnE (111 aa).

3 helical membrane passes run 36–56, 61–81, and 88–108; these read IVLW…LWLL, VPVG…TLAA, and PVSP…VILG. The EamA domain maps to 40–109; it reads LGLALACLGL…IIGGIVILGS (70 aa).

The protein belongs to the ArnE family. Heterodimer of ArnE and ArnF.

The protein localises to the cell inner membrane. Its pathway is bacterial outer membrane biogenesis; lipopolysaccharide biosynthesis. In terms of biological role, translocates 4-amino-4-deoxy-L-arabinose-phosphoundecaprenol (alpha-L-Ara4N-phosphoundecaprenol) from the cytoplasmic to the periplasmic side of the inner membrane. The chain is Probable 4-amino-4-deoxy-L-arabinose-phosphoundecaprenol flippase subunit ArnE from Shigella flexneri.